Consider the following 348-residue polypeptide: UDP-glucose 4-epimerase (348 aa).

Position 125 (Thr125) interacts with substrate. The Proton acceptor role is filled by Tyr149.

It belongs to the NAD(P)-dependent epimerase/dehydratase family. NAD(+) is required as a cofactor.

The catalysed reaction is UDP-alpha-D-glucose = UDP-alpha-D-galactose. It participates in carbohydrate metabolism; galactose metabolism. It functions in the pathway glycan metabolism; exopolysaccharide biosynthesis. This is UDP-glucose 4-epimerase (exoB) from Azospirillum brasilense.